Consider the following 408-residue polypeptide: Imidazolonepropionase (408 aa).

Residues His73 and His75 each coordinate Fe(3+). 2 residues coordinate Zn(2+): His73 and His75. Positions 82, 145, and 178 each coordinate 4-imidazolone-5-propanoate. Tyr145 serves as a coordination point for N-formimidoyl-L-glutamate. Residue His243 participates in Fe(3+) binding. His243 contributes to the Zn(2+) binding site. Gln246 contributes to the 4-imidazolone-5-propanoate binding site. Asp318 provides a ligand contact to Fe(3+). Asp318 lines the Zn(2+) pocket. N-formimidoyl-L-glutamate-binding residues include Asn320 and Gly322. Ser323 is a binding site for 4-imidazolone-5-propanoate.

The protein belongs to the metallo-dependent hydrolases superfamily. HutI family. Requires Zn(2+) as cofactor. The cofactor is Fe(3+).

It localises to the cytoplasm. The enzyme catalyses 4-imidazolone-5-propanoate + H2O = N-formimidoyl-L-glutamate. It functions in the pathway amino-acid degradation; L-histidine degradation into L-glutamate; N-formimidoyl-L-glutamate from L-histidine: step 3/3. Functionally, catalyzes the hydrolytic cleavage of the carbon-nitrogen bond in imidazolone-5-propanoate to yield N-formimidoyl-L-glutamate. It is the third step in the universal histidine degradation pathway. This Shewanella putrefaciens (strain CN-32 / ATCC BAA-453) protein is Imidazolonepropionase.